A 168-amino-acid polypeptide reads, in one-letter code: Thiol peroxidase (168 aa).

The Thioredoxin domain maps to 19–168 (PQAGSKAQTF…YEAALAVLKA (150 aa)). The active-site Cysteine sulfenic acid (-SOH) intermediate is the C61. Residues C61 and C95 are joined by a disulfide bond.

The protein belongs to the peroxiredoxin family. Tpx subfamily. As to quaternary structure, homodimer.

The catalysed reaction is a hydroperoxide + [thioredoxin]-dithiol = an alcohol + [thioredoxin]-disulfide + H2O. In terms of biological role, thiol-specific peroxidase that catalyzes the reduction of hydrogen peroxide and organic hydroperoxides to water and alcohols, respectively. Plays a role in cell protection against oxidative stress by detoxifying peroxides. This is Thiol peroxidase from Shigella dysenteriae.